The chain runs to 333 residues: Ketol-acid reductoisomerase (NADP(+)) (333 aa).

One can recognise a KARI N-terminal Rossmann domain in the interval 1-179 (MFYDDNADLS…GGTRAGVIKT (179 aa)). Residues 22-25 (YGSQ), Ser48, Ser50, and 80-83 (DTAQ) each bind NADP(+). The active site involves His105. An NADP(+)-binding site is contributed by Gly131. In terms of domain architecture, KARI C-terminal knotted spans 180-325 (TFKDETETDL…KKLRDLMSWV (146 aa)). Mg(2+)-binding residues include Asp188, Glu192, Glu224, and Glu228. Ser249 contributes to the substrate binding site.

It belongs to the ketol-acid reductoisomerase family. Requires Mg(2+) as cofactor.

The catalysed reaction is (2R)-2,3-dihydroxy-3-methylbutanoate + NADP(+) = (2S)-2-acetolactate + NADPH + H(+). The enzyme catalyses (2R,3R)-2,3-dihydroxy-3-methylpentanoate + NADP(+) = (S)-2-ethyl-2-hydroxy-3-oxobutanoate + NADPH + H(+). The protein operates within amino-acid biosynthesis; L-isoleucine biosynthesis; L-isoleucine from 2-oxobutanoate: step 2/4. It functions in the pathway amino-acid biosynthesis; L-valine biosynthesis; L-valine from pyruvate: step 2/4. Involved in the biosynthesis of branched-chain amino acids (BCAA). Catalyzes an alkyl-migration followed by a ketol-acid reduction of (S)-2-acetolactate (S2AL) to yield (R)-2,3-dihydroxy-isovalerate. In the isomerase reaction, S2AL is rearranged via a Mg-dependent methyl migration to produce 3-hydroxy-3-methyl-2-ketobutyrate (HMKB). In the reductase reaction, this 2-ketoacid undergoes a metal-dependent reduction by NADPH to yield (R)-2,3-dihydroxy-isovalerate. This is Ketol-acid reductoisomerase (NADP(+)) from Mycobacterium leprae (strain TN).